The sequence spans 176 residues: Probable DNA-directed RNA polymerase subunit delta (176 aa).

The 68-residue stretch at 14 to 81 folds into the HTH HARE-type domain; that stretch reads KSFIDMAYTL…GENLWGLRDW (68 aa). The segment at 114–176 is disordered; the sequence is LGEDEMDDDD…VFEDEEDFND (63 aa). 2 stretches are compositionally biased toward acidic residues: residues 116–145 and 153–176; these read EDEM…QVEE and VIEE…DFND.

The protein belongs to the RpoE family. As to quaternary structure, RNAP is composed of a core of 2 alpha, a beta and a beta' subunits. The core is associated with a delta subunit and one of several sigma factors.

In terms of biological role, participates in both the initiation and recycling phases of transcription. In the presence of the delta subunit, RNAP displays an increased specificity of transcription, a decreased affinity for nucleic acids, and an increased efficiency of RNA synthesis because of enhanced recycling. This chain is Probable DNA-directed RNA polymerase subunit delta, found in Staphylococcus aureus (strain JH1).